The following is a 102-amino-acid chain: Integration host factor subunit alpha (102 aa).

Residues 49 to 70 are disordered; the sequence is FGNFQLRTKPQRPGRNPKTGEE.

The protein belongs to the bacterial histone-like protein family. As to quaternary structure, heterodimer of an alpha and a beta chain.

Functionally, this protein is one of the two subunits of integration host factor, a specific DNA-binding protein that functions in genetic recombination as well as in transcriptional and translational control. This is Integration host factor subunit alpha from Nitrosomonas europaea (strain ATCC 19718 / CIP 103999 / KCTC 2705 / NBRC 14298).